Consider the following 293-residue polypeptide: Protease HtpX (293 aa).

Transmembrane regions (helical) follow at residues 4–24 (IALF…VLSL) and 32–52 (VTGL…VSLL). Zn(2+) is bound at residue His-139. Glu-140 is an active-site residue. His-143 is a Zn(2+) binding site. Transmembrane regions (helical) follow at residues 158–178 (VVNT…AGFL) and 193–213 (LIYF…ASII). Glu-222 lines the Zn(2+) pocket.

This sequence belongs to the peptidase M48B family. It depends on Zn(2+) as a cofactor.

It is found in the cell inner membrane. The chain is Protease HtpX from Cronobacter sakazakii (strain ATCC BAA-894) (Enterobacter sakazakii).